Here is a 39-residue protein sequence, read N- to C-terminus: Photosystem II reaction center protein J (39 aa).

Residues 9-29 (LWLVGLVGGLAVITMLGLFIY) traverse the membrane as a helical segment.

The protein belongs to the PsbJ family. As to quaternary structure, PSII is composed of 1 copy each of membrane proteins PsbA, PsbB, PsbC, PsbD, PsbE, PsbF, PsbH, PsbI, PsbJ, PsbK, PsbL, PsbM, PsbT, PsbX, PsbY, PsbZ, Psb30/Ycf12, at least 3 peripheral proteins of the oxygen-evolving complex and a large number of cofactors. It forms dimeric complexes.

It is found in the plastid. The protein resides in the chloroplast thylakoid membrane. In terms of biological role, one of the components of the core complex of photosystem II (PSII). PSII is a light-driven water:plastoquinone oxidoreductase that uses light energy to abstract electrons from H(2)O, generating O(2) and a proton gradient subsequently used for ATP formation. It consists of a core antenna complex that captures photons, and an electron transfer chain that converts photonic excitation into a charge separation. The protein is Photosystem II reaction center protein J of Phaeodactylum tricornutum (strain CCAP 1055/1).